A 677-amino-acid polypeptide reads, in one-letter code: Elongation factor G 2 (677 aa).

The tr-type G domain occupies 8–283 (SRIRNIGIIA…AVVNFLPSPE (276 aa)). GTP contacts are provided by residues 17-24 (AHIDAGKT), 81-85 (DTPGH), and 135-138 (NKMD).

It belongs to the TRAFAC class translation factor GTPase superfamily. Classic translation factor GTPase family. EF-G/EF-2 subfamily.

Its subcellular location is the cytoplasm. Catalyzes the GTP-dependent ribosomal translocation step during translation elongation. During this step, the ribosome changes from the pre-translocational (PRE) to the post-translocational (POST) state as the newly formed A-site-bound peptidyl-tRNA and P-site-bound deacylated tRNA move to the P and E sites, respectively. Catalyzes the coordinated movement of the two tRNA molecules, the mRNA and conformational changes in the ribosome. The protein is Elongation factor G 2 of Syntrophus aciditrophicus (strain SB).